The following is a 461-amino-acid chain: B3 domain-containing protein REM9 (461 aa).

A DNA-binding region (TF-B3 1) is located at residues 11–103 (NQHFFQPLLP…VFHVTALGPS (93 aa)). The interval 110–146 (PQSSRHEEGEESGENEISEKEGEENVQKESDKSSSDL) is disordered. The span at 126–143 (ISEKEGEENVQKESDKSS) shows a compositional bias: basic and acidic residues. 2 consecutive DNA-binding regions (TF-B3) follow at residues 148–244 (CFSQ…CSRT) and 230–332 (LQKA…EQPS). The disordered stretch occupies residues 333-415 (FKAEDGRHKR…SGIEGNLQHT (83 aa)). Residues 384–394 (PKVEIREKIAE) show a composition bias toward basic and acidic residues. Polar residues predominate over residues 400-415 (RASNKSSGIEGNLQHT).

The protein resides in the nucleus. The polypeptide is B3 domain-containing protein REM9 (REM9) (Arabidopsis thaliana (Mouse-ear cress)).